A 362-amino-acid polypeptide reads, in one-letter code: Phospho-N-acetylmuramoyl-pentapeptide-transferase (362 aa).

10 helical membrane-spanning segments follow: residues Gly-28 to Leu-48, Thr-75 to Leu-95, Val-100 to Leu-120, Ala-134 to Gln-154, Val-170 to Gly-190, Gly-201 to Val-221, Leu-241 to Pro-261, Val-265 to Val-285, Leu-290 to Val-310, and Thr-339 to Leu-359.

Belongs to the glycosyltransferase 4 family. MraY subfamily. Requires Mg(2+) as cofactor.

Its subcellular location is the cell inner membrane. The enzyme catalyses UDP-N-acetyl-alpha-D-muramoyl-L-alanyl-gamma-D-glutamyl-meso-2,6-diaminopimeloyl-D-alanyl-D-alanine + di-trans,octa-cis-undecaprenyl phosphate = di-trans,octa-cis-undecaprenyl diphospho-N-acetyl-alpha-D-muramoyl-L-alanyl-D-glutamyl-meso-2,6-diaminopimeloyl-D-alanyl-D-alanine + UMP. Its pathway is cell wall biogenesis; peptidoglycan biosynthesis. Functionally, catalyzes the initial step of the lipid cycle reactions in the biosynthesis of the cell wall peptidoglycan: transfers peptidoglycan precursor phospho-MurNAc-pentapeptide from UDP-MurNAc-pentapeptide onto the lipid carrier undecaprenyl phosphate, yielding undecaprenyl-pyrophosphoryl-MurNAc-pentapeptide, known as lipid I. This Paramagnetospirillum magneticum (strain ATCC 700264 / AMB-1) (Magnetospirillum magneticum) protein is Phospho-N-acetylmuramoyl-pentapeptide-transferase.